Here is a 164-residue protein sequence, read N- to C-terminus: Phosphopantetheine adenylyltransferase (164 aa).

Residue T10 participates in substrate binding. Residues 10–11 and H18 contribute to the ATP site; that span reads TF. K42, L74, and R88 together coordinate substrate. Residues 89 to 91, E99, and 124 to 130 each bind ATP; these read GIR and NSFISST.

Belongs to the bacterial CoaD family. As to quaternary structure, homohexamer. It depends on Mg(2+) as a cofactor.

The protein resides in the cytoplasm. It carries out the reaction (R)-4'-phosphopantetheine + ATP + H(+) = 3'-dephospho-CoA + diphosphate. The protein operates within cofactor biosynthesis; coenzyme A biosynthesis; CoA from (R)-pantothenate: step 4/5. In terms of biological role, reversibly transfers an adenylyl group from ATP to 4'-phosphopantetheine, yielding dephospho-CoA (dPCoA) and pyrophosphate. The sequence is that of Phosphopantetheine adenylyltransferase from Pseudoalteromonas translucida (strain TAC 125).